The chain runs to 417 residues: Voltage-gated ClC-type chloride channel ClcB (417 aa).

10 helical membrane passes run 5–25 (LLIA…FRHA), 54–74 (LITP…WQKM), 146–166 (LWIA…PLAG), 168–188 (LFIA…PVVV), 222–242 (VMIV…MWLM), 258–278 (WQLA…PTVW), 288–308 (FLLS…KILA), 316–336 (GAPG…GMFL), 349–371 (EIAI…HAPI), and 380–400 (MTGE…ASVL).

The protein belongs to the chloride channel (TC 2.A.49) family. ClcB subfamily.

Its subcellular location is the cell inner membrane. Functionally, probably acts as an electrical shunt for an outwardly-directed proton pump that is linked to amino acid decarboxylation, as part of the extreme acid resistance (XAR) response. The protein is Voltage-gated ClC-type chloride channel ClcB of Salmonella dublin (strain CT_02021853).